Here is a 565-residue protein sequence, read N- to C-terminus: Proline--tRNA ligase (565 aa).

This sequence belongs to the class-II aminoacyl-tRNA synthetase family. ProS type 1 subfamily. As to quaternary structure, homodimer.

The protein localises to the cytoplasm. The catalysed reaction is tRNA(Pro) + L-proline + ATP = L-prolyl-tRNA(Pro) + AMP + diphosphate. Functionally, catalyzes the attachment of proline to tRNA(Pro) in a two-step reaction: proline is first activated by ATP to form Pro-AMP and then transferred to the acceptor end of tRNA(Pro). As ProRS can inadvertently accommodate and process non-cognate amino acids such as alanine and cysteine, to avoid such errors it has two additional distinct editing activities against alanine. One activity is designated as 'pretransfer' editing and involves the tRNA(Pro)-independent hydrolysis of activated Ala-AMP. The other activity is designated 'posttransfer' editing and involves deacylation of mischarged Ala-tRNA(Pro). The misacylated Cys-tRNA(Pro) is not edited by ProRS. This is Proline--tRNA ligase from Lactobacillus gasseri (strain ATCC 33323 / DSM 20243 / BCRC 14619 / CIP 102991 / JCM 1131 / KCTC 3163 / NCIMB 11718 / NCTC 13722 / AM63).